Reading from the N-terminus, the 119-residue chain is Autophagy-related protein 8h (119 aa).

Gly119 is lipidated: Phosphatidylethanolamine amidated glycine.

Belongs to the ATG8 family. As to quaternary structure, interacts with ATG4. Interacts with ATI1. In terms of processing, gly-119 forms then a thioester bond with the 'Cys-558' of ATG7 (E1-like activating enzyme) before being transferred to the 'Cys-258' of ATG3 (the specific E2 conjugating enzyme), in order to be finally amidated with phosphatidylethanolamine. This lipid modification anchors ATG8 to autophagosomes. As to expression, constitutively expressed.

It localises to the cytoplasmic vesicle. The protein resides in the autophagosome membrane. The protein localises to the vacuole membrane. It is found in the cytoplasm. Its subcellular location is the cytoskeleton. Ubiquitin-like modifier involved in autophagosomes formation. May mediate the delivery of the autophagosomes to the vacuole via the microtubule cytoskeleton. This Arabidopsis thaliana (Mouse-ear cress) protein is Autophagy-related protein 8h (ATG8H).